Here is a 226-residue protein sequence, read N- to C-terminus: Thymidylate kinase (226 aa).

20–27 (GGEGAGKS) is a binding site for ATP.

Belongs to the thymidylate kinase family.

The enzyme catalyses dTMP + ATP = dTDP + ADP. Its function is as follows. Phosphorylation of dTMP to form dTDP in both de novo and salvage pathways of dTTP synthesis. In Bradyrhizobium sp. (strain BTAi1 / ATCC BAA-1182), this protein is Thymidylate kinase.